Consider the following 88-residue polypeptide: Small ribosomal subunit protein bS20 (88 aa).

This sequence belongs to the bacterial ribosomal protein bS20 family.

In terms of biological role, binds directly to 16S ribosomal RNA. The sequence is that of Small ribosomal subunit protein bS20 from Methylorubrum extorquens (strain CM4 / NCIMB 13688) (Methylobacterium extorquens).